A 95-amino-acid chain; its full sequence is Aspartyl/glutamyl-tRNA(Asn/Gln) amidotransferase subunit C (95 aa).

It belongs to the GatC family. In terms of assembly, heterotrimer of A, B and C subunits.

The catalysed reaction is L-glutamyl-tRNA(Gln) + L-glutamine + ATP + H2O = L-glutaminyl-tRNA(Gln) + L-glutamate + ADP + phosphate + H(+). It carries out the reaction L-aspartyl-tRNA(Asn) + L-glutamine + ATP + H2O = L-asparaginyl-tRNA(Asn) + L-glutamate + ADP + phosphate + 2 H(+). Functionally, allows the formation of correctly charged Asn-tRNA(Asn) or Gln-tRNA(Gln) through the transamidation of misacylated Asp-tRNA(Asn) or Glu-tRNA(Gln) in organisms which lack either or both of asparaginyl-tRNA or glutaminyl-tRNA synthetases. The reaction takes place in the presence of glutamine and ATP through an activated phospho-Asp-tRNA(Asn) or phospho-Glu-tRNA(Gln). This is Aspartyl/glutamyl-tRNA(Asn/Gln) amidotransferase subunit C from Nitratidesulfovibrio vulgaris (strain DSM 19637 / Miyazaki F) (Desulfovibrio vulgaris).